The sequence spans 734 residues: MATKFPKFSQGLAQDPTTRRIWFGIATAHDFESHDGMTEENLYQKIFASHFGQLAIIFLWTSGNLFHVAWQGNFERWVADPLHVRPIAHAIWDPHFGQPAVEAFTRGGASGPVNISYSGVYQWWYTIGMRSNTDLYIGALFLLITASMTLFAGWLHLQPQFKPSLSWFKNAESRLNHHLSGLFGVSSLAWTGHLIHVAIPESRGQHVRWDNFLNVLPHPAGLSPFFTGNWAAYAQNPDSTSHIFSTSQGAGTAILTFLGGFHPQTQSLWLTDIAHHHLAIAVLFIVAGHMYRTNFGIGHSMREILEAQRPPGGRLGAGHSGLYDTVNNSLHFQLGLALASLGVITSVVAQHMYSLSPYAFLAQDFTTQAALYTHHQYIAGFIMTGAFAHGAIFFIRDYDPELNKDNVLARMLEHKEAIISHLSWASLFLGFHTLGLYVHNDVMQAFGTPEKQILIEPVFAQWIQASHGKSLYGFDVLLSSSSSFAASASDSIWLPGWLDAINSNSNSLFLTIGPGDFLVHHAIALGLHTTTLILVKGALDARGSKLMPDKKDFGYSFPCDGPGRGGTCDISAWDAFYLAVFWMLNTIGWVTFYWHWKHLTLWQGNVAQFDESSTYLMGWLRDYLWLNSSQLINGYNPFGMNSLSVWAWMFLFGHLIWATGFMFLISWRGYWQELIETLAWAHERTPLANLVRWKDKPVALSIVQARVVGLAHFSVGYVFTYAAFLIASTSGKFG.

8 helical membrane-spanning segments follow: residues 46 to 69, 135 to 158, 175 to 199, 273 to 291, 330 to 353, 369 to 395, 417 to 439, and 517 to 535; these read IFAS…FHVA, LYIG…LHLQ, LNHH…HVAI, IAHH…GHMY, LHFQ…QHMY, AALY…IFFI, AIIS…LYVH, and FLVH…LILV. Residues Cys-559 and Cys-568 each coordinate [4Fe-4S] cluster. The next 2 membrane-spanning stretches (helical) occupy residues 575–596 and 643–665; these read AFYL…YWHW and LSVW…MFLI. Positions 654, 662, and 670 each coordinate chlorophyll a. Trp-671 is a phylloquinone binding site. A helical transmembrane segment spans residues 707 to 727; sequence VVGLAHFSVGYVFTYAAFLIA.

This sequence belongs to the PsaA/PsaB family. As to quaternary structure, the PsaA/B heterodimer binds the P700 chlorophyll special pair and subsequent electron acceptors. PSI consists of a core antenna complex that captures photons, and an electron transfer chain that converts photonic excitation into a charge separation. The eukaryotic PSI reaction center is composed of at least 11 subunits. It depends on P700 is a chlorophyll a/chlorophyll a' dimer, A0 is one or more chlorophyll a, A1 is one or both phylloquinones and FX is a shared 4Fe-4S iron-sulfur center. as a cofactor.

It is found in the plastid. The protein resides in the chloroplast thylakoid membrane. The enzyme catalyses reduced [plastocyanin] + hnu + oxidized [2Fe-2S]-[ferredoxin] = oxidized [plastocyanin] + reduced [2Fe-2S]-[ferredoxin]. Its function is as follows. PsaA and PsaB bind P700, the primary electron donor of photosystem I (PSI), as well as the electron acceptors A0, A1 and FX. PSI is a plastocyanin-ferredoxin oxidoreductase, converting photonic excitation into a charge separation, which transfers an electron from the donor P700 chlorophyll pair to the spectroscopically characterized acceptors A0, A1, FX, FA and FB in turn. Oxidized P700 is reduced on the lumenal side of the thylakoid membrane by plastocyanin. The sequence is that of Photosystem I P700 chlorophyll a apoprotein A2 from Mesostigma viride (Green alga).